Reading from the N-terminus, the 400-residue chain is uncharacterized protein (400 aa).

The protein belongs to the mimivirus R640 family.

It localises to the virion. This is an uncharacterized protein from Acanthamoeba polyphaga (Amoeba).